The primary structure comprises 205 residues: Large ribosomal subunit protein uL4 (205 aa).

The segment covering A43 to T60 has biased composition (polar residues). Residues A43–N96 form a disordered region. A compositionally biased stretch (basic residues) spans K62 to S74.

The protein belongs to the universal ribosomal protein uL4 family. Part of the 50S ribosomal subunit.

Functionally, one of the primary rRNA binding proteins, this protein initially binds near the 5'-end of the 23S rRNA. It is important during the early stages of 50S assembly. It makes multiple contacts with different domains of the 23S rRNA in the assembled 50S subunit and ribosome. Forms part of the polypeptide exit tunnel. This chain is Large ribosomal subunit protein uL4, found in Thiobacillus denitrificans (strain ATCC 25259 / T1).